Consider the following 326-residue polypeptide: ATP synthase gamma chain (326 aa).

The protein belongs to the ATPase gamma chain family. As to quaternary structure, F-type ATPases have 2 components, CF(1) - the catalytic core - and CF(0) - the membrane proton channel. CF(1) has five subunits: alpha(3), beta(3), gamma(1), delta(1), epsilon(1). CF(0) has three main subunits: a, b and c.

The protein resides in the cell membrane. Its function is as follows. Produces ATP from ADP in the presence of a proton gradient across the membrane. The gamma chain is believed to be important in regulating ATPase activity and the flow of protons through the CF(0) complex. This Rhodococcus opacus (strain B4) protein is ATP synthase gamma chain.